The primary structure comprises 199 residues: Imidazole glycerol phosphate synthase subunit HisH (199 aa).

A Glutamine amidotransferase type-1 domain is found at 1–199 (MTVVVDYEMG…QILKNLREML (199 aa)). The active-site Nucleophile is the cysteine 79. Residues histidine 180 and glutamate 182 contribute to the active site.

As to quaternary structure, heterodimer of HisH and HisF.

It is found in the cytoplasm. The enzyme catalyses 5-[(5-phospho-1-deoxy-D-ribulos-1-ylimino)methylamino]-1-(5-phospho-beta-D-ribosyl)imidazole-4-carboxamide + L-glutamine = D-erythro-1-(imidazol-4-yl)glycerol 3-phosphate + 5-amino-1-(5-phospho-beta-D-ribosyl)imidazole-4-carboxamide + L-glutamate + H(+). It carries out the reaction L-glutamine + H2O = L-glutamate + NH4(+). It functions in the pathway amino-acid biosynthesis; L-histidine biosynthesis; L-histidine from 5-phospho-alpha-D-ribose 1-diphosphate: step 5/9. In terms of biological role, IGPS catalyzes the conversion of PRFAR and glutamine to IGP, AICAR and glutamate. The HisH subunit catalyzes the hydrolysis of glutamine to glutamate and ammonia as part of the synthesis of IGP and AICAR. The resulting ammonia molecule is channeled to the active site of HisF. This Carboxydothermus hydrogenoformans (strain ATCC BAA-161 / DSM 6008 / Z-2901) protein is Imidazole glycerol phosphate synthase subunit HisH.